Reading from the N-terminus, the 240-residue chain is MKVKKGGGGTGSGAEPVPGASNRSAEPTREPGAEAESGSESEPEPGPGPRLGPLQGKQPIGPEDVLGLQRITGDYLCSPEENIYKIDFVRFKIRDMDSGTVLFEIKKPPVSERLPINRRDLDPNAGRFVRYQFTPAFLRLRQVGATVEFTVGDKPVNNFRMIERHYFRNQLLKSFDFHFGFCIPSSKNTCEHIYDFPPLSEELISEMIRHPYETQSDSFYFVDDRLVMHNKADYSYSGTP.

Residues 1-12 (MKVKKGGGGTGS) show a composition bias toward gly residues. The tract at residues 1–62 (MKVKKGGGGT…PLQGKQPIGP (62 aa)) is disordered. A phosphoserine; by CK2 mark is found at Ser-37, Ser-39, and Ser-41. Tyr-131 contacts tetradecanoate.

It belongs to the PDE6D/unc-119 family. May interact with GTP-bound ARL1. Interacts with ARL2 and ARL3 (GTP-bound forms); this promotes the release of myristoylated cargo proteins. Found in a complex with ARL3, RP2 and UNC119; RP2 induces hydrolysis of GTP ARL3 in the complex, leading to the release of UNC119. Interacts with NPHP3 (when myristoylated). Interacts with CYS1 (when myristoylated). Interacts with MACIR; interaction only takes place when UNC119 is not liganded with myristoylated proteins. Interacts with CABP4; in the absence of calcium. Interacts with DNM1; leading to a decrease of DNM1 GTPase activity. Interacts with LCK; this interaction plays a crucial role in activation of LCK. Interacts with FYN. Interacts with RAB11A; in a cell cycle-dependent manner. Interacts with LYN (via SH2 and SH3 domains); leading to LYN activation. Found in a complex with ABL1, ABL2, CRK and UNC119; leading to the inhibition of CRK phosphorylation by ABL kinases. Interacts with CD44. Interacts with KLHL18 (via kelch repeats). Interacts with PPP3CA, PPP3CB and PPP3CC. Interacts with USP48; this interaction promotes UNC119 stability. In terms of processing, phosphorylation suppresses its interaction with KLHL18 and down-regulates its KLHL18-mediated degradation. Phosphorylated more under light conditions than dark conditions. Dephosphorylated by calcineurin. In terms of tissue distribution, localized in photoreceptor synapses in the outer plexiform layer of the retina.

The protein resides in the cytoplasm. The protein localises to the cytoskeleton. It is found in the microtubule organizing center. Its subcellular location is the centrosome. It localises to the spindle. The protein resides in the spindle pole. Functionally, involved in synaptic functions in photoreceptor cells, the signal transduction in immune cells as a Src family kinase activator, endosome recycling, the uptake of bacteria and endocytosis, protein trafficking in sensory neurons and as lipid-binding chaperone with specificity for a diverse subset of myristoylated proteins. Specifically binds the myristoyl moiety of a subset of N-terminally myristoylated proteins and is required for their localization. Binds myristoylated GNAT1 and is required for G-protein localization and trafficking in sensory neurons. Probably plays a role in trafficking proteins in photoreceptor cells. Plays important roles in mediating Src family kinase signals for the completion of cytokinesis via RAB11A. The chain is Protein unc-119 homolog A (Unc119) from Mus musculus (Mouse).